A 147-amino-acid chain; its full sequence is Small ribosomal subunit protein uS12 (147 aa).

This sequence belongs to the universal ribosomal protein uS12 family. Part of the 30S ribosomal subunit.

Its function is as follows. With S4 and S5 plays an important role in translational accuracy. Located at the interface of the 30S and 50S subunits. The sequence is that of Small ribosomal subunit protein uS12 from Methanococcus aeolicus (strain ATCC BAA-1280 / DSM 17508 / OCM 812 / Nankai-3).